We begin with the raw amino-acid sequence, 113 residues long: Large ribosomal subunit protein eL36z (113 aa).

A compositionally biased stretch (basic residues) spans 78 to 88 (RKLGTHKRAKR). The interval 78–113 (RKLGTHKRAKRKREEMSSVLRKMRSLGGAAAAEKKM) is disordered.

The protein belongs to the eukaryotic ribosomal protein eL36 family.

The protein is Large ribosomal subunit protein eL36z (RPL36A) of Arabidopsis thaliana (Mouse-ear cress).